A 119-amino-acid polypeptide reads, in one-letter code: MARFVVVALLVLLSLSGLEAIQRAPKIQVYSRHPAENGKPNFLNCYVSGFHPSDIEVDLLKNGKKIEKVEHSDLSFSKDWSFYLLYYTEFTPNEKDEYACRVSHVTLSTPKTVKWDRNM.

The first 20 residues, 1–20, serve as a signal peptide directing secretion; the sequence is MARFVVVALLVLLSLSGLEA. The Ig-like C1-type domain maps to 25–114; it reads PKIQVYSRHP…VTLSTPKTVK (90 aa). Residues C45 and C100 are joined by a disulfide bond.

It belongs to the beta-2-microglobulin family. In terms of assembly, heterodimer of an alpha chain and a beta chain. Beta-2-microglobulin is the beta-chain of major histocompatibility complex class I molecules.

The protein localises to the secreted. Component of the class I major histocompatibility complex (MHC). Involved in the presentation of peptide antigens to the immune system. This chain is Beta-2-microglobulin (B2M), found in Aotus azarae (Azara's night monkey).